The chain runs to 94 residues: Large ribosomal subunit protein bL25 (94 aa).

It belongs to the bacterial ribosomal protein bL25 family. Part of the 50S ribosomal subunit; part of the 5S rRNA/L5/L18/L25 subcomplex. Contacts the 5S rRNA. Binds to the 5S rRNA independently of L5 and L18.

In terms of biological role, this is one of the proteins that binds to the 5S RNA in the ribosome where it forms part of the central protuberance. The sequence is that of Large ribosomal subunit protein bL25 from Escherichia coli (strain K12 / DH10B).